A 350-amino-acid chain; its full sequence is MEVRHNWTVAEVQTLMDKPFMDLIFEAQLVHRKYQQANHVQVSTLLSIKTGACPEDCKYCPQSAHYRTDVDRERLMEVESVLDAAKKAKNSGSTRFCMGAAWKNPKERDMPYLLDMIKGVKEMGLETCMTLGMITAEQAGELSEAGLDYYNHNLDTSPEFYGNIITTRTYQDRLDTLSHVRDAGMKICSGGIIGMGESASDRAGLFVELANLPQHPESVPVNMLVKVKGTPLEDAEDVDPFDFIRLIAVARIMMPESAVRLSAGRESMNEQMQALCFMAGANSVFYGCKLLTTPNPDEDTDMQLFKKLGVNSEQVAQKPDQIQEHELLDRVAERVAARPNKDDLFYEASV.

A Radical SAM core domain is found at 38 to 256 (NHVQVSTLLS…IAVARIMMPE (219 aa)). [4Fe-4S] cluster is bound by residues cysteine 53, cysteine 57, and cysteine 60. [2Fe-2S] cluster is bound by residues cysteine 97, cysteine 128, cysteine 188, and arginine 260.

This sequence belongs to the radical SAM superfamily. Biotin synthase family. In terms of assembly, homodimer. The cofactor is [4Fe-4S] cluster. It depends on [2Fe-2S] cluster as a cofactor.

The catalysed reaction is (4R,5S)-dethiobiotin + (sulfur carrier)-SH + 2 reduced [2Fe-2S]-[ferredoxin] + 2 S-adenosyl-L-methionine = (sulfur carrier)-H + biotin + 2 5'-deoxyadenosine + 2 L-methionine + 2 oxidized [2Fe-2S]-[ferredoxin]. It functions in the pathway cofactor biosynthesis; biotin biosynthesis; biotin from 7,8-diaminononanoate: step 2/2. Functionally, catalyzes the conversion of dethiobiotin (DTB) to biotin by the insertion of a sulfur atom into dethiobiotin via a radical-based mechanism. The sequence is that of Biotin synthase from Aliivibrio fischeri (strain MJ11) (Vibrio fischeri).